Here is a 105-residue protein sequence, read N- to C-terminus: Putative regulatory protein COPRO5265_1186 (105 aa).

The disordered stretch occupies residues 76 to 105 (RLEEEEEEEERTEPITEQEAELEEESGEDV). A compositionally biased stretch (acidic residues) spans 78 to 105 (EEEEEEEERTEPITEQEAELEEESGEDV).

The protein belongs to the RemA family.

In Coprothermobacter proteolyticus (strain ATCC 35245 / DSM 5265 / OCM 4 / BT), this protein is Putative regulatory protein COPRO5265_1186.